The sequence spans 839 residues: MANILRKVIENDKGELRKLEKIAKKVESYADQMASLSDRDLQGKTLEFKERYQKGETLEQLLPEAFAVVREAAKRVLGLFPYRVQIMGGIVLHNGDVPEMRTGEGKTLTATMPVYLNAIAGEGVHVITVNEYLSTRDATEMGEVYSWLGLSVGINLAAKSPAEKREAYNCDITYSTNSEVGFDYLRDNMVVRQEDMVQRPLNFALVDEVDSVLIDEARTPLIVSGAVSSETNQLYIRADMFVKTLTSVDYVIDVPTKTIGLSDSGIDKAESYFNLSNLYDIENVALTHFIDNALRANYIMLLDIDYVVSEDGEILIVDQFTGRTMEGRRFSDGLHQAIEAKEGVRIQEESKTSASITYQNMFRMYKKLAGMTGTAKTEEEEFREVYNMRIIPIPTNRPIARIDHTDLLYPTLESKFRAVVEDVKTRHAKGQPILVGTVAVETSDLISRKLVEAGIPHEVLNAKNHFKEAQIIMNAGQRGAVTIATNMAGRGTDIKLGEGVRELGGLCVIGTERHESRRIDNQLRGRSGRQGDPGESQFYLSLEDDLMRRFGSDRIKAFLDRMKLDEEDTVIKSGMLGRQVESAQKRVEGNNYDTRKQVLQYDDVMREQREIIYANRRDVITANRDLGPEIKAMIKRTIDRAVDAHARSNRKDAIDAIVTFARTSLVPEEFISAKELRGLKDDQIKEKLYQRALAIYDQQLSKLRDQEAIIEFQKVLILMIVDNKWTEHIDALDQLRNAVGLRGYAQNNPVVEYQAEGFKMFQDMIGAIEFDVTRTMMKAQIHEQERERASQRATTAAPQNIQSQQSANTDDLPKVERNEACPCGSGKKFKNCHGRKSFS.

Residues Q85, G103–T107, and D493 contribute to the ATP site. Over residues Q780–S790 the composition is skewed to basic and acidic residues. The disordered stretch occupies residues Q780 to S839. Polar residues predominate over residues Q791 to T809. Zn(2+) contacts are provided by C821, C823, C832, and H833. Basic residues predominate over residues K827–S839.

This sequence belongs to the SecA family. Monomer and homodimer. Part of the essential Sec protein translocation apparatus which comprises SecA, SecYEG and auxiliary proteins SecDF. Other proteins may also be involved. It depends on Zn(2+) as a cofactor.

The protein resides in the cell membrane. Its subcellular location is the cytoplasm. The catalysed reaction is ATP + H2O + cellular proteinSide 1 = ADP + phosphate + cellular proteinSide 2.. Functionally, part of the Sec protein translocase complex. Interacts with the SecYEG preprotein conducting channel. Has a central role in coupling the hydrolysis of ATP to the transfer of proteins into and across the cell membrane, serving as an ATP-driven molecular motor driving the stepwise translocation of polypeptide chains across the membrane. This Streptococcus pyogenes serotype M1 protein is Protein translocase subunit SecA.